Consider the following 190-residue polypeptide: MQAIELKKGMIFNQDGKLIEVLKSNHHKPGKGNTVMQMDLRDVMSGAVVHKTMRPSEKVDLVNVSLKKAQYLYDDDTDFIFMDTDTYEQYLIPKEHLASEAKFLMPNIEVDLKFTDEGKLIGINLPSTVKMTVKETQPEIKGATAAGGGKPATMDTGLVVTVPDFIKEGEELIIGTENGDYKGRADSITR.

The protein belongs to the elongation factor P family.

Its subcellular location is the cytoplasm. It functions in the pathway protein biosynthesis; polypeptide chain elongation. In terms of biological role, involved in peptide bond synthesis. Stimulates efficient translation and peptide-bond synthesis on native or reconstituted 70S ribosomes in vitro. Probably functions indirectly by altering the affinity of the ribosome for aminoacyl-tRNA, thus increasing their reactivity as acceptors for peptidyl transferase. In Lactobacillus johnsonii (strain CNCM I-12250 / La1 / NCC 533), this protein is Elongation factor P 1 (efp1).